A 410-amino-acid polypeptide reads, in one-letter code: Aspartic proteinase Asp1 (410 aa).

A signal peptide spans 1 to 23; the sequence is MTARLALLASLLLLLQLVPPSSA. Residues 24 to 46 constitute a propeptide, removed in mature form; sequence VVLELHGNVYPIGHFFVTMNIGD. Positions 38–392 constitute a Peptidase A1 domain; it reads FFVTMNIGDP…DSERSLLGWV (355 aa). Residues Asp56 and Asp257 contribute to the active site.

This sequence belongs to the peptidase A1 family. Expressed in pollen, nucellus, ovary wall, shoot and root meristem, coleoptiles of immature seeds, and somatic embryos.

Its function is as follows. Possesses protease activity in vitro. The sequence is that of Aspartic proteinase Asp1 (ASP1) from Oryza sativa subsp. indica (Rice).